Consider the following 65-residue polypeptide: Large ribosomal subunit protein bL33c (65 aa).

It belongs to the bacterial ribosomal protein bL33 family.

The protein localises to the plastid. It localises to the chloroplast. This is Large ribosomal subunit protein bL33c (rpl33) from Marchantia polymorpha (Common liverwort).